Here is a 552-residue protein sequence, read N- to C-terminus: Glutamine--tRNA ligase (552 aa).

Positions 33–43 match the 'HIGH' region motif; the sequence is PEPNGYLHIGH. Residues 34–36 and 40–46 each bind ATP; these read EPN and HIGHAKS. Positions 66 and 210 each coordinate L-glutamine. ATP is bound by residues T229, 259–260, and 267–269; these read RL and MSK. The short motif at 266–270 is the 'KMSKS' region element; it reads VMSKR.

It belongs to the class-I aminoacyl-tRNA synthetase family. Monomer.

It is found in the cytoplasm. It catalyses the reaction tRNA(Gln) + L-glutamine + ATP = L-glutaminyl-tRNA(Gln) + AMP + diphosphate. The protein is Glutamine--tRNA ligase of Clostridium perfringens (strain ATCC 13124 / DSM 756 / JCM 1290 / NCIMB 6125 / NCTC 8237 / Type A).